Consider the following 441-residue polypeptide: uncharacterized protein (441 aa).

12 helical membrane-spanning segments follow: residues 21 to 41 (VVVA…MSLG), 51 to 71 (LGGG…AVAI), 94 to 114 (AAST…VTMS), 118 to 138 (VIPV…GVFA), 150 to 170 (VLTF…GGIF), 195 to 215 (AMLL…FVSY), 239 to 259 (QHIL…LYTG), 260 to 280 (SMII…VIAW), 291 to 311 (VHMM…AAVM), 334 to 354 (LAAL…GSSF), 363 to 383 (IYVP…ALVG), and 419 to 439 (VVPT…IAAM).

It localises to the cell membrane. This is an uncharacterized protein from Vibrio parahaemolyticus serotype O3:K6 (strain RIMD 2210633).